We begin with the raw amino-acid sequence, 160 residues long: 3-dehydroquinate dehydratase (160 aa).

Residue Tyr28 is the Proton acceptor of the active site. Substrate-binding residues include Asn79, His85, and Asp92. The active-site Proton donor is His105. Substrate-binding positions include 106-107 (MS) and Arg116.

Belongs to the type-II 3-dehydroquinase family. Homododecamer.

It carries out the reaction 3-dehydroquinate = 3-dehydroshikimate + H2O. It functions in the pathway metabolic intermediate biosynthesis; chorismate biosynthesis; chorismate from D-erythrose 4-phosphate and phosphoenolpyruvate: step 3/7. In terms of biological role, catalyzes a trans-dehydration via an enolate intermediate. The polypeptide is 3-dehydroquinate dehydratase (Gloeobacter violaceus (strain ATCC 29082 / PCC 7421)).